Here is a 554-residue protein sequence, read N- to C-terminus: Glucose-6-phosphate isomerase (554 aa).

The active-site Proton donor is the Glu358. Catalysis depends on residues His389 and Lys515. Residues 527 to 540 (ADNSPAPQSDSSTD) are compositionally biased toward polar residues. A disordered region spans residues 527–554 (ADNSPAPQSDSSTDALVRRYRSERGRTS). The span at 542–554 (LVRRYRSERGRTS) shows a compositional bias: basic and acidic residues.

Belongs to the GPI family.

The protein resides in the cytoplasm. The catalysed reaction is alpha-D-glucose 6-phosphate = beta-D-fructose 6-phosphate. It participates in carbohydrate biosynthesis; gluconeogenesis. Its pathway is carbohydrate degradation; glycolysis; D-glyceraldehyde 3-phosphate and glycerone phosphate from D-glucose: step 2/4. Its function is as follows. Catalyzes the reversible isomerization of glucose-6-phosphate to fructose-6-phosphate. The sequence is that of Glucose-6-phosphate isomerase from Mycobacterium avium (strain 104).